Reading from the N-terminus, the 639-residue chain is Threonine--tRNA ligase (639 aa).

The 61-residue stretch at 1 to 61 (MIKVALKDGS…DTDCDLNLFK (61 aa)) folds into the TGS domain. Residues 242–532 (DHRKLGKELG…LIEHYAGKFP (291 aa)) form a catalytic region. Zn(2+)-binding residues include Cys333, His384, and His509.

This sequence belongs to the class-II aminoacyl-tRNA synthetase family. As to quaternary structure, homodimer. The cofactor is Zn(2+).

The protein resides in the cytoplasm. The catalysed reaction is tRNA(Thr) + L-threonine + ATP = L-threonyl-tRNA(Thr) + AMP + diphosphate + H(+). Catalyzes the attachment of threonine to tRNA(Thr) in a two-step reaction: L-threonine is first activated by ATP to form Thr-AMP and then transferred to the acceptor end of tRNA(Thr). Also edits incorrectly charged L-seryl-tRNA(Thr). The protein is Threonine--tRNA ligase of Clostridioides difficile (strain 630) (Peptoclostridium difficile).